The chain runs to 251 residues: Hydroxypyruvate/pyruvate aldolase (251 aa).

His44 (proton acceptor) is an active-site residue. Arg69 contacts 3-hydroxypyruvate. Glu145 provides a ligand contact to Mg(2+). Residues Thr170 and Asp171 each contribute to the 3-hydroxypyruvate site. Residue Asp171 coordinates Mg(2+).

This sequence belongs to the HpcH/HpaI aldolase family. Homohexamer. Trimer of homodimers. Mn(2+) is required as a cofactor. The cofactor is Mg(2+). Requires Co(2+) as cofactor. Zn(2+) serves as cofactor.

The catalysed reaction is D-glyceraldehyde + 3-hydroxypyruvate = 2-dehydro-D-galactonate. It carries out the reaction D-glyceraldehyde + pyruvate = 2-dehydro-3-deoxy-L-galactonate. The enzyme catalyses L-glyceraldehyde + 3-hydroxypyruvate = (3S,4S,5S)-3,4,5,6-tetrahydroxy-2-oxohexanoate. It catalyses the reaction (R)-lactaldehyde + 3-hydroxypyruvate = (3S,4S,5R)-3,4,5-trihydroxy-2-oxohexanoate. The catalysed reaction is (R)-lactaldehyde + 3-hydroxypyruvate = (3S,4R,5R)-3,4,5-trihydroxy-2-oxohexanoate. It carries out the reaction (S)-lactaldehyde + 3-hydroxypyruvate = (3S,4S,5S)-3,4,5-trihydroxy-2-oxohexanoate. The enzyme catalyses D-erythrose + 3-hydroxypyruvate = (3S,4S,5R,6R)-3,4,5,6,7-pentahydroxy-2-oxoheptanoate. With respect to regulation, binding of substrate induces a dynamic movement of the metal cofactor between an inactive coordination sphere to a catalytically active one. When oxaloacetate is used as substrate, activity is increased in the presence of micromolar concentrations of inorganic phosphate. The phosphate does not improve the binding of the substrate, but exclusively increases its rate of decarboxylation. Excessive phosphate concentrations negatively affect the reaction rate by removing the metal cofactor. Its function is as follows. Aldolase which can catalyze in vitro the aldolisation reaction between hydroxypyruvate (HPA) or pyruvate (PA) and D-glyceraldehyde (D-GA). The condensation of hydroxypyruvate and D-glyceraldehyde produces 2-dehydro-D-galactonate as the major product. The condensation of pyruvate and D-glyceraldehyde produces 2-dehydro-3-deoxy-L-galactonate. Can use other electrophilic substrates such as L-glyceraldehyde, D- and L-lactaldehyde and D-erythrose. Also catalyzes the retro-aldol type decarboxylation of oxaloacetate, a general property of known pyruvate aldolases. This is Hydroxypyruvate/pyruvate aldolase from Rhizorhabdus wittichii (strain DSM 6014 / CCUG 31198 / JCM 15750 / NBRC 105917 / EY 4224 / RW1) (Sphingomonas wittichii).